The sequence spans 128 residues: Sulfurtransferase TusD (128 aa).

Cys-78 functions as the Cysteine persulfide intermediate in the catalytic mechanism.

The protein belongs to the DsrE/TusD family. As to quaternary structure, heterohexamer, formed by a dimer of trimers. The hexameric TusBCD complex contains 2 copies each of TusB, TusC and TusD. The TusBCD complex interacts with TusE.

The protein resides in the cytoplasm. Part of a sulfur-relay system required for 2-thiolation of 5-methylaminomethyl-2-thiouridine (mnm(5)s(2)U) at tRNA wobble positions. Accepts sulfur from TusA and transfers it in turn to TusE. The protein is Sulfurtransferase TusD of Cronobacter sakazakii (strain ATCC BAA-894) (Enterobacter sakazakii).